Here is a 415-residue protein sequence, read N- to C-terminus: ATP-dependent Clp protease ATP-binding subunit ClpX (415 aa).

The ClpX-type ZB domain maps to 1–54; the sequence is MARNRMGGALICSFCNKPESSERFVVPGPGGIAICDRCVDLCESYIKSYKTVRP. C12, C15, C35, and C38 together coordinate Zn(2+). Residue 117-124 coordinates ATP; the sequence is PTGSGKTL.

This sequence belongs to the ClpX chaperone family. In terms of assembly, component of the ClpX-ClpP complex. Forms a hexameric ring that, in the presence of ATP, binds to fourteen ClpP subunits assembled into a disk-like structure with a central cavity, resembling the structure of eukaryotic proteasomes.

Functionally, ATP-dependent specificity component of the Clp protease. It directs the protease to specific substrates. Can perform chaperone functions in the absence of ClpP. This Treponema denticola (strain ATCC 35405 / DSM 14222 / CIP 103919 / JCM 8153 / KCTC 15104) protein is ATP-dependent Clp protease ATP-binding subunit ClpX.